The following is a 2696-amino-acid chain: Histone-lysine N-methyltransferase, H3 lysine-36 specific (2696 aa).

At serine 117 the chain carries Phosphoserine. Disordered regions lie at residues 207–252 (MGSE…EKAA) and 281–311 (DPDSSTSTLGNMLELPGTSSSSTSQELPFCQ). Basic and acidic residues predominate over residues 236–248 (QKNKQRNEVDGSN). 2 stretches are compositionally biased toward polar residues: residues 281–290 (DPDSSTSTLG) and 297–306 (GTSSSSTSQE). Residues 323–388 (VGDLIWAKFK…AGKAIVMFEG (66 aa)) enclose the PWWP 1 domain. Phosphoserine occurs at positions 483 and 486. The interval 487 to 514 (ADEKEKPCAKSRARKSSDNPKRTSVKKG) is disordered. A Phosphoserine modification is found at serine 766. Residues 872 to 891 (LGEDVSDSGTSKPSKPLLFS) are disordered. Residue lysine 906 forms a Glycyl lysine isopeptide (Lys-Gly) (interchain with G-Cter in SUMO2) linkage. Disordered regions lie at residues 936-1035 (YRSP…DAFS), 1067-1093 (VLQGDRERGGSLRGGAEDPSKEDPLQI), 1112-1134 (SKVKQSDPGKISEKGLSFENGKG), 1243-1272 (SIGDMEKEPGIPSLTPQAELPEPAVRSEKK), 1294-1344 (PKKK…EPPV), 1382-1428 (SPRP…KKGD), and 1480-1534 (KMQC…MQGE). Over residues 948-961 (SPVGVSKVLVSGGS) the composition is skewed to low complexity. Over residues 971-982 (GTQNSANPSPSG) the composition is skewed to polar residues. Composition is skewed to basic and acidic residues over residues 1000–1017 (SDKRDLPASGKSRSDCVT), 1070–1090 (GDRERGGSLRGGAEDPSKEDP), and 1112–1124 (SKVKQSDPGKISE). The segment covering 1300-1314 (KVQEQVHKVSSRCEE) has biased composition (basic and acidic residues). Residues 1323 to 1337 (SSAQNKQVDENSLIS) show a composition bias toward polar residues. A Glycyl lysine isopeptide (Lys-Gly) (interchain with G-Cter in SUMO2) cross-link involves residue lysine 1339. Serine 1510 is modified (phosphoserine). Over residues 1513–1523 (ETVEEGVEHDP) the composition is skewed to basic and acidic residues. PHD-type zinc fingers lie at residues 1543–1589 (ENVC…CRTG), 1590–1646 (IHTC…CHAA), and 1707–1751 (VSWC…CKAG). In terms of domain architecture, PWWP 2 spans 1756–1818 (YREIVWVKVG…QARVFPYMEG (63 aa)). One can recognise an AWS domain in the interval 1890–1940 (SEIPRCNCKATDENPCGIDSECINRMLLYECHPTVCPAGGRCQNQCFSKRQ). The 118-residue stretch at 1942–2059 (PEVEIFRTLQ…AGTELTFNYN (118 aa)) folds into the SET domain. Residues 1952 to 1954 (RGW), 1994 to 1997 (TNFY), 2020 to 2021 (NH), asparagine 2065, and lysine 2071 contribute to the S-adenosyl-L-methionine site. Residues 2060–2066 (LECLGNG) are inhibits enzyme activity in the absence of bound histone. The 17-residue stretch at 2066-2082 (GKTVCKCGAPNCSGFLG) folds into the Post-SET domain. Positions 2091–2111 (ATEEKSKKFKKKQQGKRRTQG) are disordered. The span at 2097–2108 (KKFKKKQQGKRR) shows a compositional bias: basic residues. A PHD-type 4; atypical zinc finger spans residues 2118–2165 (EDECFSCGDAGQLVSCKKPGCPKVYHADCLNLTKRPAGKWECPWHQCD). Residues 2213-2422 (LEPGEIREYV…SLSQRLPPPE (210 aa)) form a disordered region. Pro residues predominate over residues 2222–2232 (VPPPVPLPPGP). Residues 2281-2298 (RPLERTDSRPQPLDKVRD) are compositionally biased toward basic and acidic residues. Over residues 2303–2314 (GTKSQSLVSSQR) the composition is skewed to polar residues. Positions 2330 to 2348 (SDKPSPVTSPSSSPSVRSQ) are enriched in low complexity. Residue serine 2369 is modified to Phosphoserine. Composition is skewed to polar residues over residues 2371-2381 (RPQSLEKTSVP) and 2394-2404 (ITSSPKPQTSD). The residue at position 2462 (threonine 2462) is a Phosphothreonine. 4 disordered regions span residues 2464–2499 (RQKERAASPHQVTPQADEKMPVLESSSWPASKGLGH), 2553–2575 (TQASGRASAGAEQTPGPLSQSPG), 2595–2616 (KSGQSFRSLGKAPASLPTEEKK), and 2665–2696 (LGRGQDPKPEQNTLPALNQAPSSHKCAESEQK). Position 2471 is a phosphoserine (serine 2471). A Glycyl lysine isopeptide (Lys-Gly) (interchain with G-Cter in SUMO2) cross-link involves residue lysine 2616. Residues 2674–2686 (EQNTLPALNQAPS) show a composition bias toward polar residues.

This sequence belongs to the class V-like SAM-binding methyltransferase superfamily. Interacts with the ligand-binding domains of RARA and THRA in the absence of ligand; in the presence of ligand the interaction is severely disrupted but some binding still occurs. Interacts with the ligand-binding domains of RXRA and ESRRA only in the presence of ligand. Interacts with ZNF496. Interacts with AR DNA- and ligand-binding domains. As to expression, expressed in the fetal/adult brain, kidney, skeletal muscle, spleen, and the thymus, and faintly in the lung.

The protein localises to the nucleus. The protein resides in the chromosome. The enzyme catalyses L-lysyl(36)-[histone H3] + 2 S-adenosyl-L-methionine = N(6),N(6)-dimethyl-L-lysyl(36)-[histone H3] + 2 S-adenosyl-L-homocysteine + 2 H(+). Its function is as follows. Histone methyltransferase that dimethylates Lys-36 of histone H3 (H3K36me2). Transcriptional intermediary factor capable of both negatively or positively influencing transcription, depending on the cellular context. This is Histone-lysine N-methyltransferase, H3 lysine-36 specific (NSD1) from Homo sapiens (Human).